Consider the following 348-residue polypeptide: Heat-inducible transcription repressor HrcA (348 aa).

This sequence belongs to the HrcA family.

In terms of biological role, negative regulator of class I heat shock genes (grpE-dnaK-dnaJ and groELS operons). Prevents heat-shock induction of these operons. The protein is Heat-inducible transcription repressor HrcA of Thermodesulfovibrio yellowstonii (strain ATCC 51303 / DSM 11347 / YP87).